A 441-amino-acid chain; its full sequence is GTPase Der (441 aa).

EngA-type G domains follow at residues 3–167 and 176–351; these read PLIA…PKGS and TKIA…EQFA. Residues 9–16, 56–60, 119–122, 182–189, 229–233, and 294–297 contribute to the GTP site; these read GRPNVGKS, DTGGF, NKID, DTAGI, and NKWD. The KH-like domain occupies 352-436; the sequence is RRITTSDLNR…PMRLLFKGRE (85 aa).

This sequence belongs to the TRAFAC class TrmE-Era-EngA-EngB-Septin-like GTPase superfamily. EngA (Der) GTPase family. In terms of assembly, associates with the 50S ribosomal subunit.

Functionally, GTPase that plays an essential role in the late steps of ribosome biogenesis. The sequence is that of GTPase Der from Geotalea uraniireducens (strain Rf4) (Geobacter uraniireducens).